The sequence spans 670 residues: MESIIQQINQLRTSLRHHEHQYHVLDAPEIPDAEYDRMMQQLRDLEAQHPELVTNDSPTQRVGAAPLDAFEQVKHEVPMLSLDNVFDEESYLAFDKRVHDRLKTAEPLTFCCELKLDGLAVSLLYENGELVRAATRGDGTTGENITANVRTIRAIPLRLHGDNVPRRVEVRGEVFMPQAGFEQLNEEARRKGGKVFANPRNAAAGSLRQLDPRITAKRPLTFFCYGVGLLDGGELPRSHIQCLMQFKAWGLPVSERVKLCTGSDQVIAFYRQIEQDRAGLGFDIDGVVIKVDDLALQEQLGFVARAPRWATAFKFPAQEQITQVREVEFQVGRTGAITPVARLEPVQVAGVIVSNATLHNADEIERLGLRIGDTVIVRRAGDVIPQVVGVVMEQRPDDTKEITFPSQCPVCGSDIERVEGEAVARCTGGLFCAAQRKEALKHFVSRRALDVDGMGDKIIEQLVEKQYVENPADLFQLTAGKLTGLDRMGPKSAQNLIAALEKAKQTTFARFLYALGIREVGEATAANLAAHFRTLDNLRAADIETLKSVPDVGEVVAKHVMNFLSEEHNQKVIEELEKVVSWPEPQQIVVEESDSPFAGKTVVLTGSLTILSRDEAKDRLTALGAKVSGSVSKKTHLVIAGEAAGSKLAKAQELGIKVIDEAEMIRLLGE.

NAD(+)-binding positions include 32–36, 81–82, and glutamate 113; these read DAEYD and SL. Residue lysine 115 is the N6-AMP-lysine intermediate of the active site. Residues arginine 136, glutamate 173, lysine 290, and lysine 314 each coordinate NAD(+). Cysteine 408, cysteine 411, cysteine 426, and cysteine 432 together coordinate Zn(2+). The BRCT domain maps to 592–670; it reads ESDSPFAGKT…EAEMIRLLGE (79 aa).

Belongs to the NAD-dependent DNA ligase family. LigA subfamily. It depends on Mg(2+) as a cofactor. Requires Mn(2+) as cofactor.

The catalysed reaction is NAD(+) + (deoxyribonucleotide)n-3'-hydroxyl + 5'-phospho-(deoxyribonucleotide)m = (deoxyribonucleotide)n+m + AMP + beta-nicotinamide D-nucleotide.. In terms of biological role, DNA ligase that catalyzes the formation of phosphodiester linkages between 5'-phosphoryl and 3'-hydroxyl groups in double-stranded DNA using NAD as a coenzyme and as the energy source for the reaction. It is essential for DNA replication and repair of damaged DNA. This is DNA ligase from Yersinia pestis bv. Antiqua (strain Antiqua).